Here is a 484-residue protein sequence, read N- to C-terminus: Major capsid protein (484 aa).

This sequence belongs to the NCLDV major capsid protein family. Homotrimer.

The protein resides in the virion. Functionally, major capsid protein that self assembles to form an icosahedral capsid. Represents around 50% of the total virion protein mass. The sequence is that of Major capsid protein (MCP) from Wiseana iridescent virus (WIV).